The following is a 399-amino-acid chain: Exodeoxyribonuclease 7 large subunit (399 aa).

The protein belongs to the XseA family. Heterooligomer composed of large and small subunits.

Its subcellular location is the cytoplasm. The enzyme catalyses Exonucleolytic cleavage in either 5'- to 3'- or 3'- to 5'-direction to yield nucleoside 5'-phosphates.. In terms of biological role, bidirectionally degrades single-stranded DNA into large acid-insoluble oligonucleotides, which are then degraded further into small acid-soluble oligonucleotides. In Clostridium botulinum (strain Eklund 17B / Type B), this protein is Exodeoxyribonuclease 7 large subunit.